The following is a 238-amino-acid chain: Purine nucleoside phosphorylase DeoD-type (238 aa).

H4 is a binding site for a purine D-ribonucleoside. Phosphate-binding positions include G20, R24, R43, and 87 to 90 (RVGS). A purine D-ribonucleoside is bound by residues 179–181 (EME) and 203–204 (SD). D204 functions as the Proton donor in the catalytic mechanism.

The protein belongs to the PNP/UDP phosphorylase family. Homohexamer; trimer of homodimers.

It carries out the reaction a purine D-ribonucleoside + phosphate = a purine nucleobase + alpha-D-ribose 1-phosphate. The enzyme catalyses a purine 2'-deoxy-D-ribonucleoside + phosphate = a purine nucleobase + 2-deoxy-alpha-D-ribose 1-phosphate. In terms of biological role, catalyzes the reversible phosphorolytic breakdown of the N-glycosidic bond in the beta-(deoxy)ribonucleoside molecules, with the formation of the corresponding free purine bases and pentose-1-phosphate. The polypeptide is Purine nucleoside phosphorylase DeoD-type (Haemophilus ducreyi (strain 35000HP / ATCC 700724)).